The sequence spans 95 residues: Protein TusB (95 aa).

This sequence belongs to the DsrH/TusB family. Heterohexamer, formed by a dimer of trimers. The hexameric TusBCD complex contains 2 copies each of TusB, TusC and TusD. The TusBCD complex interacts with TusE.

It localises to the cytoplasm. Functionally, part of a sulfur-relay system required for 2-thiolation of 5-methylaminomethyl-2-thiouridine (mnm(5)s(2)U) at tRNA wobble positions. This is Protein TusB from Erwinia tasmaniensis (strain DSM 17950 / CFBP 7177 / CIP 109463 / NCPPB 4357 / Et1/99).